The primary structure comprises 227 residues: Cytochrome c oxidase subunit 2 (227 aa).

Residues 1 to 14 lie on the Mitochondrial intermembrane side of the membrane; sequence MAHAAQVGLQDATS. The chain crosses the membrane as a helical span at residues 15-45; the sequence is PIMEELIIFHDHALMIIFLICFLVLYALFLT. Residues 46–59 lie on the Mitochondrial matrix side of the membrane; it reads LTTKLTNTSISDAQ. Residues 60–87 form a helical membrane-spanning segment; it reads EMETVWTILPAIILVLIALPSLRILYMT. Residues 88-227 are Mitochondrial intermembrane-facing; the sequence is DEVNDPSFTI…IFEMGPVFTL (140 aa). H161, C196, E198, C200, H204, and M207 together coordinate Cu cation. Position 198 (E198) interacts with Mg(2+).

This sequence belongs to the cytochrome c oxidase subunit 2 family. Component of the cytochrome c oxidase (complex IV, CIV), a multisubunit enzyme composed of 14 subunits. The complex is composed of a catalytic core of 3 subunits MT-CO1, MT-CO2 and MT-CO3, encoded in the mitochondrial DNA, and 11 supernumerary subunits COX4I, COX5A, COX5B, COX6A, COX6B, COX6C, COX7A, COX7B, COX7C, COX8 and NDUFA4, which are encoded in the nuclear genome. The complex exists as a monomer or a dimer and forms supercomplexes (SCs) in the inner mitochondrial membrane with NADH-ubiquinone oxidoreductase (complex I, CI) and ubiquinol-cytochrome c oxidoreductase (cytochrome b-c1 complex, complex III, CIII), resulting in different assemblies (supercomplex SCI(1)III(2)IV(1) and megacomplex MCI(2)III(2)IV(2)). Found in a complex with TMEM177, COA6, COX18, COX20, SCO1 and SCO2. Interacts with TMEM177 in a COX20-dependent manner. Interacts with COX20. Interacts with COX16. The cofactor is Cu cation.

The protein localises to the mitochondrion inner membrane. The enzyme catalyses 4 Fe(II)-[cytochrome c] + O2 + 8 H(+)(in) = 4 Fe(III)-[cytochrome c] + 2 H2O + 4 H(+)(out). Its function is as follows. Component of the cytochrome c oxidase, the last enzyme in the mitochondrial electron transport chain which drives oxidative phosphorylation. The respiratory chain contains 3 multisubunit complexes succinate dehydrogenase (complex II, CII), ubiquinol-cytochrome c oxidoreductase (cytochrome b-c1 complex, complex III, CIII) and cytochrome c oxidase (complex IV, CIV), that cooperate to transfer electrons derived from NADH and succinate to molecular oxygen, creating an electrochemical gradient over the inner membrane that drives transmembrane transport and the ATP synthase. Cytochrome c oxidase is the component of the respiratory chain that catalyzes the reduction of oxygen to water. Electrons originating from reduced cytochrome c in the intermembrane space (IMS) are transferred via the dinuclear copper A center (CU(A)) of subunit 2 and heme A of subunit 1 to the active site in subunit 1, a binuclear center (BNC) formed by heme A3 and copper B (CU(B)). The BNC reduces molecular oxygen to 2 water molecules using 4 electrons from cytochrome c in the IMS and 4 protons from the mitochondrial matrix. This is Cytochrome c oxidase subunit 2 (MT-CO2) from Pan troglodytes (Chimpanzee).